A 330-amino-acid polypeptide reads, in one-letter code: Phosphate acyltransferase (330 aa).

This sequence belongs to the PlsX family. Homodimer. Probably interacts with PlsY.

It localises to the cytoplasm. The catalysed reaction is a fatty acyl-[ACP] + phosphate = an acyl phosphate + holo-[ACP]. It participates in lipid metabolism; phospholipid metabolism. In terms of biological role, catalyzes the reversible formation of acyl-phosphate (acyl-PO(4)) from acyl-[acyl-carrier-protein] (acyl-ACP). This enzyme utilizes acyl-ACP as fatty acyl donor, but not acyl-CoA. The polypeptide is Phosphate acyltransferase (Bacillus thuringiensis (strain Al Hakam)).